Consider the following 182-residue polypeptide: MRFVVALTGASGQILGIRLIEKLTELGAEVYAVASRAAKITLKAETDYDEGYVREIATKYYDEDEIAAPFASGSFRHDGMAVVPCSIKTASSIAYGIADNLIARAADVTLKEKRRLVLAIREAPLHSGHLKTLARLAEMGAVIFPPVLSFYTRPKSVDDLIEHTVSRIAEQLGVEVDYRRWG.

FMN-binding positions include 9–11 (GAS), Ser-35, 86–89 (SIKT), and Arg-121. Dimethylallyl phosphate contacts are provided by Tyr-151 and Arg-167.

It belongs to the UbiX/PAD1 family.

It catalyses the reaction dimethylallyl phosphate + FMNH2 = prenylated FMNH2 + phosphate. Its function is as follows. Flavin prenyltransferase that catalyzes the synthesis of the prenylated FMN cofactor (prenyl-FMN) for 4-hydroxy-3-polyprenylbenzoic acid decarboxylase UbiD. The prenyltransferase is metal-independent and links a dimethylallyl moiety from dimethylallyl monophosphate (DMAP) to the flavin N5 and C6 atoms of FMN. In Archaeoglobus fulgidus (strain ATCC 49558 / DSM 4304 / JCM 9628 / NBRC 100126 / VC-16), this protein is Flavin prenyltransferase UbiX.